The chain runs to 320 residues: ATP-dependent 6-phosphofructokinase (320 aa).

Gly12 serves as a coordination point for ATP. ADP contacts are provided by residues Arg22–Arg26 and Arg55–Asp60. ATP-binding positions include Arg73–Phe74 and Gly103–Ser106. Asp104 contributes to the Mg(2+) binding site. A substrate-binding site is contributed by Thr126–Asp128. The Proton acceptor role is filled by Asp128. Arg155 is a binding site for ADP. Residues Arg163 and Met170–Arg172 each bind substrate. Residues Gly186 to Glu188, Lys212, and Lys214 to His216 contribute to the ADP site. Residues Glu223, Arg244, and His250–Arg253 contribute to the substrate site.

The protein belongs to the phosphofructokinase type A (PFKA) family. ATP-dependent PFK group I subfamily. Prokaryotic clade 'B1' sub-subfamily. As to quaternary structure, homotetramer. Mg(2+) is required as a cofactor.

The protein localises to the cytoplasm. It catalyses the reaction beta-D-fructose 6-phosphate + ATP = beta-D-fructose 1,6-bisphosphate + ADP + H(+). The protein operates within carbohydrate degradation; glycolysis; D-glyceraldehyde 3-phosphate and glycerone phosphate from D-glucose: step 3/4. With respect to regulation, allosterically activated by ADP and other diphosphonucleosides, and allosterically inhibited by phosphoenolpyruvate. Its function is as follows. Catalyzes the phosphorylation of D-fructose 6-phosphate to fructose 1,6-bisphosphate by ATP, the first committing step of glycolysis. This chain is ATP-dependent 6-phosphofructokinase, found in Buchnera aphidicola subsp. Schizaphis graminum (strain Sg).